The primary structure comprises 131 residues: MTTKRKPYVRPMTSTWWKKLPFYRFYMLREGTAVPAVWFSIELIFALFALKNGPEAWAGFVDFLQNPVIVIINLITLTAALLHTKTWFELAPKAANIIVKDEKMGPEPIIKSLWAVTVVATIVILFVALYW.

Helical transmembrane passes span 30–50, 57–77, and 109–129; these read EGTA…LFAL, WAGF…LITL, and IIKS…FVAL.

Belongs to the FrdC family. In terms of assembly, part of an enzyme complex containing four subunits: a flavoprotein (FrdA), an iron-sulfur protein (FrdB), and two hydrophobic anchor proteins (FrdC and FrdD).

The protein resides in the cell inner membrane. In terms of biological role, two distinct, membrane-bound, FAD-containing enzymes are responsible for the catalysis of fumarate and succinate interconversion; fumarate reductase is used in anaerobic growth, and succinate dehydrogenase is used in aerobic growth. Anchors the catalytic components of the fumarate reductase complex to the cell inner membrane, binds quinones. In Shigella flexneri, this protein is Fumarate reductase subunit C.